Consider the following 549-residue polypeptide: Maturase K (549 aa).

The protein belongs to the intron maturase 2 family. MatK subfamily.

The protein resides in the plastid. The protein localises to the chloroplast. Its function is as follows. Usually encoded in the trnK tRNA gene intron. Probably assists in splicing its own and other chloroplast group II introns. The sequence is that of Maturase K from Albidella oligococca (Caldesia oligococca).